The following is a 306-amino-acid chain: UDP-3-O-acyl-N-acetylglucosamine deacetylase (306 aa).

Residues H79, H238, and D242 each contribute to the Zn(2+) site. Residue H265 is the Proton donor of the active site.

Belongs to the LpxC family. Zn(2+) serves as cofactor.

It carries out the reaction a UDP-3-O-[(3R)-3-hydroxyacyl]-N-acetyl-alpha-D-glucosamine + H2O = a UDP-3-O-[(3R)-3-hydroxyacyl]-alpha-D-glucosamine + acetate. The protein operates within glycolipid biosynthesis; lipid IV(A) biosynthesis; lipid IV(A) from (3R)-3-hydroxytetradecanoyl-[acyl-carrier-protein] and UDP-N-acetyl-alpha-D-glucosamine: step 2/6. Functionally, catalyzes the hydrolysis of UDP-3-O-myristoyl-N-acetylglucosamine to form UDP-3-O-myristoylglucosamine and acetate, the committed step in lipid A biosynthesis. This Shewanella sediminis (strain HAW-EB3) protein is UDP-3-O-acyl-N-acetylglucosamine deacetylase.